A 198-amino-acid polypeptide reads, in one-letter code: Hookworm platelet inhibitor 1 (198 aa).

A signal peptide spans methionine 1–alanine 17. 5 disulfide bridges follow: cysteine 24–cysteine 65, cysteine 78–cysteine 146, cysteine 141–cysteine 154, cysteine 174–cysteine 186, and cysteine 177–cysteine 195.

It belongs to the CRISP family. Monomer. In terms of tissue distribution, detected in cephalic glands.

The protein localises to the secreted. Hookworms inhibitor of platelet aggregation and adhesion. Native protein inhibits platelet aggregation induced by ADP, epinephrine, and thrombin. In addition, it prevents adhesion of resting platelets to immobilized fibrinogen and collagen. May act by binding to glycoprotein IIb/IIIa (ITGA2B/ITGB3) and integrin alpha-2/beta-1 (ITGA1/ITGB1), respectively. It is noteworthy that the recombinant protein fails to inhibit binding to fibrinogen (through ITGA2B/ITGB3) and collagen (through ITGA1/ITGB1). The sequence is that of Hookworm platelet inhibitor 1 from Ancylostoma caninum (Dog hookworm).